A 378-amino-acid polypeptide reads, in one-letter code: Erythronate-4-phosphate dehydrogenase (378 aa).

Substrate-binding residues include Ser-45 and Thr-66. 2 residues coordinate NAD(+): Asp-146 and Thr-175. The active site involves Arg-208. Asp-232 contributes to the NAD(+) binding site. Glu-237 is a catalytic residue. The Proton donor role is filled by His-254. Gly-257 serves as a coordination point for NAD(+). Tyr-258 contacts substrate.

It belongs to the D-isomer specific 2-hydroxyacid dehydrogenase family. PdxB subfamily. In terms of assembly, homodimer.

It localises to the cytoplasm. It carries out the reaction 4-phospho-D-erythronate + NAD(+) = (R)-3-hydroxy-2-oxo-4-phosphooxybutanoate + NADH + H(+). It functions in the pathway cofactor biosynthesis; pyridoxine 5'-phosphate biosynthesis; pyridoxine 5'-phosphate from D-erythrose 4-phosphate: step 2/5. Its function is as follows. Catalyzes the oxidation of erythronate-4-phosphate to 3-hydroxy-2-oxo-4-phosphonooxybutanoate. In Salmonella dublin (strain CT_02021853), this protein is Erythronate-4-phosphate dehydrogenase.